The chain runs to 1070 residues: DNA-directed RNA polymerase subunit beta (1070 aa).

The protein belongs to the RNA polymerase beta chain family. In terms of assembly, in plastids the minimal PEP RNA polymerase catalytic core is composed of four subunits: alpha, beta, beta', and beta''. When a (nuclear-encoded) sigma factor is associated with the core the holoenzyme is formed, which can initiate transcription.

Its subcellular location is the plastid. The protein resides in the chloroplast. It carries out the reaction RNA(n) + a ribonucleoside 5'-triphosphate = RNA(n+1) + diphosphate. Its function is as follows. DNA-dependent RNA polymerase catalyzes the transcription of DNA into RNA using the four ribonucleoside triphosphates as substrates. The polypeptide is DNA-directed RNA polymerase subunit beta (Nicotiana sylvestris (Wood tobacco)).